A 61-amino-acid polypeptide reads, in one-letter code: Small ribosomal subunit protein uS14 (61 aa).

Zn(2+) contacts are provided by Cys-24, Cys-27, Cys-40, and Cys-43.

This sequence belongs to the universal ribosomal protein uS14 family. Zinc-binding uS14 subfamily. As to quaternary structure, part of the 30S ribosomal subunit. Contacts proteins S3 and S10. Zn(2+) is required as a cofactor.

Functionally, binds 16S rRNA, required for the assembly of 30S particles and may also be responsible for determining the conformation of the 16S rRNA at the A site. This chain is Small ribosomal subunit protein uS14, found in Sulfurimonas denitrificans (strain ATCC 33889 / DSM 1251) (Thiomicrospira denitrificans (strain ATCC 33889 / DSM 1251)).